We begin with the raw amino-acid sequence, 364 residues long: Phosphoserine aminotransferase (364 aa).

R42 is an L-glutamate binding site. Residues 76-77 (AS), W100, T150, D169, and Q192 each bind pyridoxal 5'-phosphate. K193 carries the post-translational modification N6-(pyridoxal phosphate)lysine. 234–235 (NT) provides a ligand contact to pyridoxal 5'-phosphate.

The protein belongs to the class-V pyridoxal-phosphate-dependent aminotransferase family. SerC subfamily. Homodimer. Pyridoxal 5'-phosphate is required as a cofactor.

The protein localises to the cytoplasm. The enzyme catalyses O-phospho-L-serine + 2-oxoglutarate = 3-phosphooxypyruvate + L-glutamate. It catalyses the reaction 4-(phosphooxy)-L-threonine + 2-oxoglutarate = (R)-3-hydroxy-2-oxo-4-phosphooxybutanoate + L-glutamate. The protein operates within amino-acid biosynthesis; L-serine biosynthesis; L-serine from 3-phospho-D-glycerate: step 2/3. Its function is as follows. Catalyzes the reversible conversion of 3-phosphohydroxypyruvate to phosphoserine and of 3-hydroxy-2-oxo-4-phosphonooxybutanoate to phosphohydroxythreonine. This Shouchella clausii (strain KSM-K16) (Alkalihalobacillus clausii) protein is Phosphoserine aminotransferase.